A 207-amino-acid polypeptide reads, in one-letter code: 8-oxoguanine DNA glycosylase/AP lyase (207 aa).

Active-site residues include K129 and D147.

This sequence belongs to the type-2 OGG1 family.

The catalysed reaction is 2'-deoxyribonucleotide-(2'-deoxyribose 5'-phosphate)-2'-deoxyribonucleotide-DNA = a 3'-end 2'-deoxyribonucleotide-(2,3-dehydro-2,3-deoxyribose 5'-phosphate)-DNA + a 5'-end 5'-phospho-2'-deoxyribonucleoside-DNA + H(+). In terms of biological role, catalyzes the excision of an oxidatively damaged form of guanine (7,8-dihydro-8-oxoguanine = 8-oxoG) from DNA. Also cleaves the DNA backbone at apurinic/apyrimidinic sites (AP sites). This Thermotoga maritima (strain ATCC 43589 / DSM 3109 / JCM 10099 / NBRC 100826 / MSB8) protein is 8-oxoguanine DNA glycosylase/AP lyase.